Here is a 177-residue protein sequence, read N- to C-terminus: Dual-action ribosomal maturation protein DarP (177 aa).

The interval 1 to 26 (MKIVGDSEHFKQPYDSDEEYVSKTED) is disordered.

Belongs to the DarP family.

The protein resides in the cytoplasm. Its function is as follows. Member of a network of 50S ribosomal subunit biogenesis factors which assembles along the 30S-50S interface, preventing incorrect 23S rRNA structures from forming. Promotes peptidyl transferase center (PTC) maturation. This chain is Dual-action ribosomal maturation protein DarP, found in Shewanella sp. (strain ANA-3).